Consider the following 348-residue polypeptide: Dihydroorotase (348 aa).

Positions 17 and 19 each coordinate Zn(2+). Substrate is bound by residues 19 to 21 (HLR) and Asn-45. 3 residues coordinate Zn(2+): Lys-103, His-140, and His-178. Lys-103 is modified (N6-carboxylysine). Residue His-140 participates in substrate binding. Leu-223 lines the substrate pocket. Asp-251 is a Zn(2+) binding site. Asp-251 is a catalytic residue. Substrate contacts are provided by His-255 and Ala-267.

The protein belongs to the metallo-dependent hydrolases superfamily. DHOase family. Class II DHOase subfamily. As to quaternary structure, homodimer. Zn(2+) serves as cofactor.

The catalysed reaction is (S)-dihydroorotate + H2O = N-carbamoyl-L-aspartate + H(+). It participates in pyrimidine metabolism; UMP biosynthesis via de novo pathway; (S)-dihydroorotate from bicarbonate: step 3/3. Catalyzes the reversible cyclization of carbamoyl aspartate to dihydroorotate. The chain is Dihydroorotase from Salmonella agona (strain SL483).